A 365-amino-acid polypeptide reads, in one-letter code: PHD finger protein 6 (365 aa).

The residue at position 2 (S2) is an N-acetylserine. Short sequence motifs (nuclear localization signal) lie at residues 13–16 (RQRK) and 129–133 (RKHKK). The C2HC pre-PHD-type 1 zinc-finger motif lies at 14–52 (QRKCGFCKSNRDKECGQLLISENQKVAAHHKCMLFSSAL). The tract at residues 14–132 (QRKCGFCKSN…IYMVYCRKHK (119 aa)) is extended PHD1 domain (ePHD1). The PHD-type 1 zinc-finger motif lies at 80–132 (LMCSLCHCPGATIGCDVKTCHRTYHYHCALHDKAQIREKPSQGIYMVYCRKHK). Phosphoserine occurs at positions 138, 145, and 155. The tract at residues 139-211 (EADLEESFNE…RSSPSDTRPK (73 aa)) is disordered. The Nucleolar localization signal motif lies at 157 to 169 (KSKKKSRKGRPRK). Over residues 157-171 (KSKKKSRKGRPRKTN) the composition is skewed to basic residues. K173 is covalently cross-linked (Glycyl lysine isopeptide (Lys-Gly) (interchain with G-Cter in SUMO2)). Residues S183 and S199 each carry the phosphoserine modification. The C2HC pre-PHD-type 2 zinc finger occupies 209–249 (RPKCGFCHVGEEENQARGKLHIFNAKKAAAHYKCMLFSSGT). An extended PHD2 domain (ePHD2) region spans residues 209 to 330 (RPKCGFCHVG…IYKLYCKNHS (122 aa)). K227 participates in a covalent cross-link: Glycyl lysine isopeptide (Lys-Gly) (interchain with G-Cter in SUMO2). The PHD-type 2 zinc finger occupies 278-330 (MKCTLCSQPGATIGCEIKACVKTYHYHCGVQDKAKYIENMSRGIYKLYCKNHS). The segment at 330-365 (SGNDERDEEDEERESKSRGKVEIDQQQLTQQQLNGN) is disordered. Positions 342-352 (RESKSRGKVEI) are enriched in basic and acidic residues. The span at 354 to 365 (QQQLTQQQLNGN) shows a compositional bias: low complexity. Phosphothreonine is present on T358.

In terms of assembly, interacts with UBTF. Interacts with the NuRD complex component RBBP4 (via the nucleolar localization motif), the interaction mediates transcriptional repression activity.

It localises to the nucleus. It is found in the nucleolus. The protein resides in the chromosome. Its subcellular location is the centromere. The protein localises to the kinetochore. Its function is as follows. Transcriptional regulator that associates with ribosomal RNA promoters and suppresses ribosomal RNA (rRNA) transcription. This is PHD finger protein 6 (PHF6) from Bos taurus (Bovine).